The chain runs to 89 residues: Small ribosomal subunit protein uS14 (89 aa).

Residues cysteine 52, cysteine 55, cysteine 68, and cysteine 71 each coordinate Zn(2+).

The protein belongs to the universal ribosomal protein uS14 family. Part of the 30S ribosomal subunit. Contacts proteins S3 and S10. Zn(2+) serves as cofactor.

Its function is as follows. Binds 16S rRNA, required for the assembly of 30S particles and may also be responsible for determining the conformation of the 16S rRNA at the A site. In Salinibacter ruber (strain DSM 13855 / M31), this protein is Small ribosomal subunit protein uS14 (rpsN).